We begin with the raw amino-acid sequence, 431 residues long: Levansucrase LscB (431 aa).

Tryptophan 61, aspartate 62, alanine 148, arginine 218, and aspartate 219 together coordinate sucrose. The active-site Nucleophile is the aspartate 62. Glutamate 303 acts as the Proton donor/acceptor in catalysis.

This sequence belongs to the glycosyl hydrolase 68 family.

It is found in the secreted. It carries out the reaction [6)-beta-D-fructofuranosyl-(2-&gt;](n) alpha-D-glucopyranoside + sucrose = [6)-beta-D-fructofuranosyl-(2-&gt;](n+1) alpha-D-glucopyranoside + D-glucose. Catalyzes the synthesis of levan, a fructose polymer, by transferring the fructosyl moiety from sucrose to a growing acceptor molecule. The chain is Levansucrase LscB from Pseudomonas savastanoi pv. glycinea (Pseudomonas syringae pv. glycinea).